The chain runs to 593 residues: Double-stranded RNA-binding protein 2 (593 aa).

DRBM domains follow at residues methionine 1–lysine 70 and isoleucine 87–glutamine 155. Polar residues predominate over residues leucine 188–proline 197. Disordered stretches follow at residues leucine 188–alanine 221, alanine 357–glutamine 408, and valine 546–isoleucine 593. The segment covering serine 205–serine 219 has biased composition (low complexity). Positions glutamate 378–glutamine 408 are enriched in polar residues. The segment covering arginine 572–serine 586 has biased composition (low complexity).

Its function is as follows. Binds double-stranded RNA. This is Double-stranded RNA-binding protein 2 (DRB2) from Oryza sativa subsp. japonica (Rice).